A 485-amino-acid polypeptide reads, in one-letter code: Glutamyl-tRNA(Gln) amidotransferase subunit A (485 aa).

Active-site charge relay system residues include K78 and S153. The Acyl-ester intermediate role is filled by S177.

Belongs to the amidase family. GatA subfamily. Heterotrimer of A, B and C subunits.

The catalysed reaction is L-glutamyl-tRNA(Gln) + L-glutamine + ATP + H2O = L-glutaminyl-tRNA(Gln) + L-glutamate + ADP + phosphate + H(+). Allows the formation of correctly charged Gln-tRNA(Gln) through the transamidation of misacylated Glu-tRNA(Gln) in organisms which lack glutaminyl-tRNA synthetase. The reaction takes place in the presence of glutamine and ATP through an activated gamma-phospho-Glu-tRNA(Gln). The polypeptide is Glutamyl-tRNA(Gln) amidotransferase subunit A (Bacillus cereus (strain ZK / E33L)).